Here is a 298-residue protein sequence, read N- to C-terminus: MVAISMIWFFTKRMPRIFALAFNLISIFLLIFLLIGCYNPSNQSTFLVKYKFDDNSPFYTIIEKSYEKSNTTLGLEEVIIRSGYMGVCIDNIPSQYSSYNNMTTFSNSICYARKNLSSVPLYRDLEIQLSNIASSSSKTQSSVVLNILKLAQLTSVNVIHPYVLMATVILTILMFLFILYVTVPKLPFKLAVNKFLLLLSSTIVLTWGIGAMWTHVGINASYRLVPSSSMNIITVKKGKKAAVMAWFSFAFLLLDSVVLWLIFLRDRKSLKDEIDNVPCAQNRYNNYSSDSSTLHSKV.

The next 4 helical transmembrane spans lie at 17-37, 163-183, 195-215, and 243-263; these read IFAL…LIGC, VLMA…YVTV, FLLL…MWTH, and VMAW…WLIF. Ser-288 carries the post-translational modification Phosphoserine. At Thr-293 the chain carries Phosphothreonine. Position 296 is a phosphoserine (Ser-296).

The protein localises to the membrane. Functionally, required for efficient mating. The protein is Factor-induced gene 1 protein (FIG1) of Saccharomyces cerevisiae (strain ATCC 204508 / S288c) (Baker's yeast).